We begin with the raw amino-acid sequence, 204 residues long: Terpene cyclase ausL (204 aa).

The next 5 membrane-spanning stretches (helical) occupy residues L19 to V39, A49 to Y69, H75 to L95, L114 to L134, and G138 to V158.

The protein belongs to the paxB family.

The protein localises to the membrane. It functions in the pathway secondary metabolite biosynthesis; terpenoid biosynthesis. Terpene cyclase; part of the gene cluster B that mediates the biosynthesis of austinol and dehydroaustinol, two fungal meroterpenoids. The first step of the pathway is the synthesis of 3,5-dimethylorsellinic acid by the polyketide synthase ausA. 3,5-dimethylorsellinic acid is then prenylated by the polyprenyl transferase ausN. Further epoxidation by the FAD-dependent monooxygenase ausM and cyclization by the probable terpene cyclase ausL lead to the formation of protoaustinoid A. Protoaustinoid A is then oxidized to spiro-lactone preaustinoid A3 by the combined action of the FAD-binding monooxygenases ausB and ausC, and the dioxygenase ausE. Acid-catalyzed keto-rearrangement and ring contraction of the tetraketide portion of preaustinoid A3 by ausJ lead to the formation of preaustinoid A4. The aldo-keto reductase ausK, with the help of ausH, is involved in the next step by transforming preaustinoid A4 into isoaustinone which is in turn hydroxylated by the P450 monooxygenase ausI to form austinolide. Finally, the cytochrome P450 monooxygenase ausG modifies austinolide to austinol. Austinol can be further modified to dehydroaustinol which forms a diffusible complex with diorcinol that initiates conidiation. Due to genetic rearrangements of the clusters and the subsequent loss of some enzymes, the end products of the Emericella nidulans austinoid biosynthesis clusters are austinol and dehydroaustinol, even if additional enzymes, such as the O-acetyltransferase ausQ and the cytochrome P450 monooxygenase ausR are still functional. The polypeptide is Terpene cyclase ausL (Emericella nidulans (strain FGSC A4 / ATCC 38163 / CBS 112.46 / NRRL 194 / M139) (Aspergillus nidulans)).